The chain runs to 504 residues: ATP synthase subunit alpha (504 aa).

Residue 170-177 coordinates ATP; sequence GDRQTGKT.

This sequence belongs to the ATPase alpha/beta chains family. As to quaternary structure, F-type ATPases have 2 components, CF(1) - the catalytic core - and CF(0) - the membrane proton channel. CF(1) has five subunits: alpha(3), beta(3), gamma(1), delta(1), epsilon(1). CF(0) has four main subunits: a, b, b' and c.

It is found in the cellular thylakoid membrane. The catalysed reaction is ATP + H2O + 4 H(+)(in) = ADP + phosphate + 5 H(+)(out). Its function is as follows. Produces ATP from ADP in the presence of a proton gradient across the membrane. The alpha chain is a regulatory subunit. The sequence is that of ATP synthase subunit alpha from Prochlorococcus marinus (strain MIT 9211).